Reading from the N-terminus, the 774-residue chain is Dapper homolog 2 (774 aa).

Positions 67 to 93 (PEQQLEAALAALQEQLSRLRQQDIGLK) form a coiled coil. Disordered regions lie at residues 188–225 (RPQA…LDRA), 295–319 (TPQR…TIQT), 345–500 (TPAK…EKIK), and 624–710 (CPES…GAQS). Polar residues predominate over residues 438 to 452 (VQASPSSKAQQTPSA). Over residues 637–648 (RRAGGPLARGRP) the composition is skewed to low complexity. 2 stretches are compositionally biased toward basic and acidic residues: residues 655 to 672 (AYTR…ECDP) and 686 to 700 (SSDH…RESS). Residues 771-774 (MTMV) carry the PDZ-binding motif.

This sequence belongs to the dapper family. In terms of assembly, can form homodimers and heterodimers with DACT1 or DACT3. Interacts with CSNK1D, PKA catalytic subunit, PKC-type kinase, CSNK2B, DVL1, DVL2, DVL3, VANGL1, VANGL2, TGFBR1, CTNNB1, CTNND2, CTNND1, LEF1, TCF7, TCF7L1 and HDAC1.

Involved in regulation of intracellular signaling pathways during development. Negatively regulates the Nodal signaling pathway, possibly by promoting the lysosomal degradation of Nodal receptors, such as TGFBR1. May be involved in control of the morphogenetic behavior of kidney ureteric bud cells by keeping cells epithelial and restraining their mesenchymal character. May play an inhibitory role in the re-epithelialization of skin wounds by attenuating TGF-beta signaling. This chain is Dapper homolog 2 (DACT2), found in Homo sapiens (Human).